The following is a 546-amino-acid chain: NRAMP-like transporter smf-2 (546 aa).

Over 1–42 (MPGFQNANISDLAPPAREKTFDDTIAVKIPEDEKNTWFSWRK) the chain is Cytoplasmic. A helical transmembrane segment spans residues 43 to 63 (LWAFTGPGFLMSIAYLDPGNI). Residues 64-70 (ESDLQAG) are Extracellular-facing. Residues 71–91 (AQAEYKLLWVLLVSHIVGMLL) form a helical membrane-spanning segment. Over 92-119 (QRMSARLGVVSGKHMAEIAYDYYPLVPR) the chain is Cytoplasmic. A helical transmembrane segment spans residues 120 to 140 (IILWLMIEIAIVCSDMQEVIG). Over 141–152 (TAIAIYLLSSGK) the chain is Extracellular. Residues 153–173 (IPLLVGVLITILDTFTFLFID) form a helical membrane-spanning segment. At 174–181 (RYGIRKLE) the chain is on the cytoplasmic side. Residues 182-202 (FIFVALISTMAISFGYEFVVM) form a helical membrane-spanning segment. The Extracellular segment spans residues 203-228 (KPVLTKVLTGTVVPWCSGCGKEEIIT). A helical transmembrane segment spans residues 229–249 (AISIFGAVIMPHNFYLHSALV). Topologically, residues 250 to 270 (KSRKVDRSSKTRIAEANKYFS) are cytoplasmic. Residues 271–291 (IESAFALSVSFFINLFVLSVF) form a helical membrane-spanning segment. The Extracellular portion of the chain corresponds to 292–334 (ARGLYQKTNGDVNSMCLSHNDIPDSNVFPNNTSSVTVDLFQGG). Asn321 carries an N-linked (GlcNAc...) asparagine glycan. The helical transmembrane segment at 335-355 (IYLGCQFGLFAMIIWAIGIFA) threads the bilayer. The Cytoplasmic portion of the chain corresponds to 356–386 (AGQSSTMTGTYTGQFVMEGFVRISWPKWKRV). A helical transmembrane segment spans residues 387-407 (LITRAVAITPTLILCIKAHGI). The Extracellular portion of the chain corresponds to 408–415 (KNLTGMND). N-linked (GlcNAc...) asparagine glycosylation is present at Asn409. The helical transmembrane segment at 416 to 436 (FLNCVQMVQLPFALIPMITFT) threads the bilayer. Over 437 to 453 (SSKRIMHNFRTSKPLQY) the chain is Cytoplasmic. Residues 454 to 474 (FSIICGIITIGINVYFIFQYV) form a helical membrane-spanning segment. Over 475–483 (TENFGTGWL) the chain is Extracellular. The helical transmembrane segment at 484 to 504 (IFVIIGPFTLLYIAFILYLAI) threads the bilayer. At 505–546 (YCLVACELMNDTVNLPGFDFHRTLELDAPWITETFVVNDVYF) the chain is on the cytoplasmic side.

Belongs to the NRAMP family. In terms of tissue distribution, expressed in dopaminergic neurons (at protein level). Primarily expressed in mc1, mc2 and mc3 epithelial cells of the pharynx and vpil-6 pharyngeal-intestinal valve cells displaying an anterior-posterior expression gradient. Expressed in gonad sheath cells.

It is found in the apical cell membrane. The protein resides in the cytoplasmic vesicle membrane. Functionally, probable divalent metal ion transporter which regulates Mn(2+) uptake. The chain is NRAMP-like transporter smf-2 from Caenorhabditis elegans.